Consider the following 383-residue polypeptide: Acetylornithine deacetylase (383 aa).

His-80 is a Zn(2+) binding site. The active site involves Asp-82. Zn(2+) is bound at residue Asp-112. The active site involves Glu-144. Zn(2+)-binding residues include Glu-145, Glu-169, and His-355.

The protein belongs to the peptidase M20A family. ArgE subfamily. As to quaternary structure, homodimer. Zn(2+) serves as cofactor. Co(2+) is required as a cofactor. Requires glutathione as cofactor.

It is found in the cytoplasm. The catalysed reaction is N(2)-acetyl-L-ornithine + H2O = L-ornithine + acetate. It participates in amino-acid biosynthesis; L-arginine biosynthesis; L-ornithine from N(2)-acetyl-L-ornithine (linear): step 1/1. Its function is as follows. Catalyzes the hydrolysis of the amide bond of N(2)-acetylated L-amino acids. Cleaves the acetyl group from N-acetyl-L-ornithine to form L-ornithine, an intermediate in L-arginine biosynthesis pathway, and a branchpoint in the synthesis of polyamines. The chain is Acetylornithine deacetylase from Escherichia coli (strain K12 / MC4100 / BW2952).